The primary structure comprises 185 residues: Elongation factor P (185 aa).

The protein belongs to the elongation factor P family.

It localises to the cytoplasm. The protein operates within protein biosynthesis; polypeptide chain elongation. Functionally, involved in peptide bond synthesis. Stimulates efficient translation and peptide-bond synthesis on native or reconstituted 70S ribosomes in vitro. Probably functions indirectly by altering the affinity of the ribosome for aminoacyl-tRNA, thus increasing their reactivity as acceptors for peptidyl transferase. The sequence is that of Elongation factor P (efp) from Synechococcus elongatus (strain ATCC 33912 / PCC 7942 / FACHB-805) (Anacystis nidulans R2).